The primary structure comprises 197 residues: Small ribosomal subunit protein uS4B (197 aa).

The 63-residue stretch at 88–150 (SRLDNMVYRM…SRKTEMFVNN (63 aa)) folds into the S4 RNA-binding domain.

This sequence belongs to the universal ribosomal protein uS4 family. Part of the 30S ribosomal subunit. Contacts protein S5. The interaction surface between S4 and S5 is involved in control of translational fidelity.

Its function is as follows. One of the primary rRNA binding proteins, it binds directly to 16S rRNA where it nucleates assembly of the body of the 30S subunit. With S5 and S12 plays an important role in translational accuracy. The protein is Small ribosomal subunit protein uS4B of Clostridium perfringens (strain SM101 / Type A).